Here is a 344-residue protein sequence, read N- to C-terminus: Homoserine O-acetyltransferase (344 aa).

The Acyl-thioester intermediate role is filled by cysteine 142. Substrate-binding residues include lysine 163 and serine 192. Histidine 235 acts as the Proton acceptor in catalysis. Residue glutamate 237 is part of the active site. Residue arginine 249 participates in substrate binding.

Belongs to the MetA family.

The protein resides in the cytoplasm. It carries out the reaction L-homoserine + acetyl-CoA = O-acetyl-L-homoserine + CoA. The protein operates within amino-acid biosynthesis; L-methionine biosynthesis via de novo pathway; O-acetyl-L-homoserine from L-homoserine: step 1/1. Transfers an acetyl group from acetyl-CoA to L-homoserine, forming acetyl-L-homoserine. The polypeptide is Homoserine O-acetyltransferase (Bifidobacterium adolescentis (strain ATCC 15703 / DSM 20083 / NCTC 11814 / E194a)).